The chain runs to 127 residues: PanD regulatory factor (127 aa).

One can recognise an N-acetyltransferase domain in the interval 1 to 127 (MKLTILRLEH…TAQHDGWEKR (127 aa)). CoA contacts are provided by residues 66 to 68 (LRV) and 72 to 79 (TRRRGVGQ).

The protein belongs to the PanZ/PanM family. In terms of assembly, interacts with PanD in the presence of CoA. Monomer.

Functionally, controls both the activation and catalytic activity of PanD in a coenzyme A (CoA)-dependent fashion. Binding of CoA or a derivative to PanM leads to interaction with PanD, which promotes the processing and activation of pro-PanD, and subsequent substrate-mediated inhibition of the active form of PanD. Lacks acetyltransferase activity. In Salmonella typhimurium (strain LT2 / SGSC1412 / ATCC 700720), this protein is PanD regulatory factor.